The chain runs to 122 residues: Large ribosomal subunit protein bL12 (122 aa).

It belongs to the bacterial ribosomal protein bL12 family. In terms of assembly, homodimer. Part of the ribosomal stalk of the 50S ribosomal subunit. Forms a multimeric L10(L12)X complex, where L10 forms an elongated spine to which 2 to 4 L12 dimers bind in a sequential fashion. Binds GTP-bound translation factors.

In terms of biological role, forms part of the ribosomal stalk which helps the ribosome interact with GTP-bound translation factors. Is thus essential for accurate translation. The polypeptide is Large ribosomal subunit protein bL12 (Aliivibrio fischeri (strain ATCC 700601 / ES114) (Vibrio fischeri)).